We begin with the raw amino-acid sequence, 232 residues long: Octanoyltransferase (232 aa).

Positions 40–226 (GSAPERVWLL…TWQDLFGSVP (187 aa)) constitute a BPL/LPL catalytic domain. Substrate contacts are provided by residues 79-86 (RGGQWTYH), 157-159 (ALG), and 170-172 (GVA). The Acyl-thioester intermediate role is filled by C188.

Belongs to the LipB family.

The protein localises to the cytoplasm. The enzyme catalyses octanoyl-[ACP] + L-lysyl-[protein] = N(6)-octanoyl-L-lysyl-[protein] + holo-[ACP] + H(+). It participates in protein modification; protein lipoylation via endogenous pathway; protein N(6)-(lipoyl)lysine from octanoyl-[acyl-carrier-protein]: step 1/2. Functionally, catalyzes the transfer of endogenously produced octanoic acid from octanoyl-acyl-carrier-protein onto the lipoyl domains of lipoate-dependent enzymes. Lipoyl-ACP can also act as a substrate although octanoyl-ACP is likely to be the physiological substrate. The polypeptide is Octanoyltransferase (Gluconacetobacter diazotrophicus (strain ATCC 49037 / DSM 5601 / CCUG 37298 / CIP 103539 / LMG 7603 / PAl5)).